Reading from the N-terminus, the 572-residue chain is Proline--tRNA ligase (572 aa).

Belongs to the class-II aminoacyl-tRNA synthetase family. ProS type 1 subfamily. In terms of assembly, homodimer.

Its subcellular location is the cytoplasm. It carries out the reaction tRNA(Pro) + L-proline + ATP = L-prolyl-tRNA(Pro) + AMP + diphosphate. Functionally, catalyzes the attachment of proline to tRNA(Pro) in a two-step reaction: proline is first activated by ATP to form Pro-AMP and then transferred to the acceptor end of tRNA(Pro). As ProRS can inadvertently accommodate and process non-cognate amino acids such as alanine and cysteine, to avoid such errors it has two additional distinct editing activities against alanine. One activity is designated as 'pretransfer' editing and involves the tRNA(Pro)-independent hydrolysis of activated Ala-AMP. The other activity is designated 'posttransfer' editing and involves deacylation of mischarged Ala-tRNA(Pro). The misacylated Cys-tRNA(Pro) is not edited by ProRS. The chain is Proline--tRNA ligase from Yersinia pseudotuberculosis serotype O:1b (strain IP 31758).